The primary structure comprises 630 residues: tRNA uridine 5-carboxymethylaminomethyl modification enzyme MnmG (630 aa).

15 to 20 is a binding site for FAD; sequence GAGHAG. Residue 276-290 coordinates NAD(+); sequence GPRYCPSIEDKIVRF.

Belongs to the MnmG family. In terms of assembly, homodimer. Heterotetramer of two MnmE and two MnmG subunits. Requires FAD as cofactor.

It localises to the cytoplasm. In terms of biological role, NAD-binding protein involved in the addition of a carboxymethylaminomethyl (cmnm) group at the wobble position (U34) of certain tRNAs, forming tRNA-cmnm(5)s(2)U34. In Latilactobacillus sakei subsp. sakei (strain 23K) (Lactobacillus sakei subsp. sakei), this protein is tRNA uridine 5-carboxymethylaminomethyl modification enzyme MnmG.